We begin with the raw amino-acid sequence, 65 residues long: Large ribosomal subunit protein bL35 (65 aa).

The protein belongs to the bacterial ribosomal protein bL35 family.

The chain is Large ribosomal subunit protein bL35 from Acetivibrio thermocellus (strain ATCC 27405 / DSM 1237 / JCM 9322 / NBRC 103400 / NCIMB 10682 / NRRL B-4536 / VPI 7372) (Clostridium thermocellum).